Here is a 330-residue protein sequence, read N- to C-terminus: Embigin (330 aa).

The signal sequence occupies residues 1–33 (MRSHTGLRALVAPGYPLLLLCLLAATRPDPAEG). At 34 to 254 (DPTDPTFTSL…QLGESEEQNE (221 aa)) the chain is on the extracellular side. Ig-like V-type domains follow at residues 38–161 (PTFT…IHVP) and 162–256 (KAHG…NELV). N-linked (GlcNAc...) asparagine glycans are attached at residues asparagine 55, asparagine 62, asparagine 70, asparagine 101, asparagine 118, asparagine 191, asparagine 198, asparagine 216, and asparagine 221. Cystine bridges form between cysteine 89-cysteine 145 and cysteine 182-cysteine 240. Residues 255 to 283 (LVVLSFLVPLKPFLAILAEVILLVAIILL) form a helical membrane-spanning segment. The Cytoplasmic portion of the chain corresponds to 284-330 (CEVYTHKKKNDPDAGKEFEQIEQLKSDDSNGIENNVPRYRKTDSADQ). The segment covering 293-311 (NDPDAGKEFEQIEQLKSDD) has biased composition (basic and acidic residues). Residues 293-330 (NDPDAGKEFEQIEQLKSDDSNGIENNVPRYRKTDSADQ) form a disordered region. Serine 312 is modified (phosphoserine).

In terms of assembly, interacts with SLC16A1, SLC16A6 and SLC16A7. Only member of the immunoglobulin superfamily to be expressed in embryonal carcinoma cells, which resemble multipotential cells of early embryos.

It is found in the cell membrane. The protein resides in the synapse. In terms of biological role, plays a role in targeting the monocarboxylate transporters SLC16A1, SLC16A6 and SLC16A7 to the cell membrane. Plays a role in the outgrowth of motoneurons and in the formation of neuromuscular junctions. Following muscle denervation, promotes nerve terminal sprouting and the formation of additional acetylcholine receptor clusters at synaptic sites without affecting terminal Schwann cell number or morphology. Delays the retraction of terminal sprouts following re-innervation of denervated endplates. The polypeptide is Embigin (Emb) (Mus musculus (Mouse)).